Here is a 348-residue protein sequence, read N- to C-terminus: tRNA N6-adenosine threonylcarbamoyltransferase (348 aa).

2 residues coordinate Fe cation: His-111 and His-115. Substrate contacts are provided by residues 134 to 138 (LVSGG), Asp-167, Gly-180, and Asn-276. Fe cation is bound at residue Asp-304.

The protein belongs to the KAE1 / TsaD family. It depends on Fe(2+) as a cofactor.

The protein localises to the cytoplasm. It catalyses the reaction L-threonylcarbamoyladenylate + adenosine(37) in tRNA = N(6)-L-threonylcarbamoyladenosine(37) in tRNA + AMP + H(+). Its function is as follows. Required for the formation of a threonylcarbamoyl group on adenosine at position 37 (t(6)A37) in tRNAs that read codons beginning with adenine. Is involved in the transfer of the threonylcarbamoyl moiety of threonylcarbamoyl-AMP (TC-AMP) to the N6 group of A37, together with TsaE and TsaB. TsaD likely plays a direct catalytic role in this reaction. This is tRNA N6-adenosine threonylcarbamoyltransferase from Bordetella petrii (strain ATCC BAA-461 / DSM 12804 / CCUG 43448).